Reading from the N-terminus, the 94-residue chain is MICOS complex subunit MIC12 (94 aa).

Residues 7 to 23 (YGSFSVVASVLGASYYY) traverse the membrane as a helical segment.

It belongs to the MICOS complex subunit Mic12 family. Component of the mitochondrial contact site and cristae organizing system (MICOS) complex.

The protein localises to the mitochondrion inner membrane. Functionally, component of the MICOS complex, a large protein complex of the mitochondrial inner membrane that plays crucial roles in the maintenance of crista junctions, inner membrane architecture, and formation of contact sites to the outer membrane. This is MICOS complex subunit MIC12 (AIM5) from Eremothecium gossypii (strain ATCC 10895 / CBS 109.51 / FGSC 9923 / NRRL Y-1056) (Yeast).